The following is a 490-amino-acid chain: Betaine aldehyde dehydrogenase (490 aa).

2 residues coordinate K(+): isoleucine 27 and aspartate 93. 150–152 (GAW) lines the NAD(+) pocket. The active-site Charge relay system is lysine 162. Residue 176–179 (KPSE) coordinates NAD(+). A K(+)-binding site is contributed by valine 180. Position 230 to 233 (230 to 233 (GTDT)) interacts with NAD(+). Position 246 (leucine 246) interacts with K(+). Catalysis depends on glutamate 252, which acts as the Proton acceptor. NAD(+)-binding residues include glycine 254, cysteine 286, and glutamate 387. The active-site Nucleophile is the cysteine 286. At cysteine 286 the chain carries Cysteine sulfenic acid (-SOH). Residues lysine 457 and glycine 460 each coordinate K(+). Glutamate 464 functions as the Charge relay system in the catalytic mechanism.

It belongs to the aldehyde dehydrogenase family. As to quaternary structure, dimer of dimers. It depends on K(+) as a cofactor.

The enzyme catalyses betaine aldehyde + NAD(+) + H2O = glycine betaine + NADH + 2 H(+). It functions in the pathway amine and polyamine biosynthesis; betaine biosynthesis via choline pathway; betaine from betaine aldehyde: step 1/1. Functionally, involved in the biosynthesis of the osmoprotectant glycine betaine. Catalyzes the irreversible oxidation of betaine aldehyde to the corresponding acid. This Pseudomonas syringae pv. syringae (strain B728a) protein is Betaine aldehyde dehydrogenase.